The sequence spans 244 residues: Phosphoribosyl isomerase A (244 aa).

Aspartate 10 (proton acceptor) is an active-site residue. Aspartate 129 serves as the catalytic Proton donor.

Belongs to the HisA/HisF family.

It is found in the cytoplasm. It catalyses the reaction 1-(5-phospho-beta-D-ribosyl)-5-[(5-phospho-beta-D-ribosylamino)methylideneamino]imidazole-4-carboxamide = 5-[(5-phospho-1-deoxy-D-ribulos-1-ylimino)methylamino]-1-(5-phospho-beta-D-ribosyl)imidazole-4-carboxamide. The catalysed reaction is N-(5-phospho-beta-D-ribosyl)anthranilate = 1-(2-carboxyphenylamino)-1-deoxy-D-ribulose 5-phosphate. The protein operates within amino-acid biosynthesis; L-histidine biosynthesis; L-histidine from 5-phospho-alpha-D-ribose 1-diphosphate: step 4/9. It participates in amino-acid biosynthesis; L-tryptophan biosynthesis; L-tryptophan from chorismate: step 3/5. Functionally, involved in both the histidine and tryptophan biosynthetic pathways. The protein is Phosphoribosyl isomerase A of Mycobacterium ulcerans (strain Agy99).